Consider the following 271-residue polypeptide: Urease accessory protein UreD (271 aa).

This sequence belongs to the UreD family. UreD, UreF and UreG form a complex that acts as a GTP-hydrolysis-dependent molecular chaperone, activating the urease apoprotein by helping to assemble the nickel containing metallocenter of UreC. The UreE protein probably delivers the nickel.

The protein resides in the cytoplasm. Required for maturation of urease via the functional incorporation of the urease nickel metallocenter. This Haemophilus influenzae (strain PittEE) protein is Urease accessory protein UreD.